A 276-amino-acid chain; its full sequence is Putative pyridoxine kinase (276 aa).

Asn-139 contributes to the ATP binding site. Glu-142 is a binding site for Mg(2+). ATP contacts are provided by residues 176 to 180 (KGGKA), Asp-188, Gly-213, and Lys-238.

It belongs to the ThiD family.

It catalyses the reaction pyridoxal + ATP = pyridoxal 5'-phosphate + ADP + H(+). Phosphorylates B6 vitamers; functions in a salvage pathway. Uses pyridoxal, pyridoxine, and pyridoxamine as substrates. The protein is Putative pyridoxine kinase (pdxK) of Staphylococcus aureus (strain COL).